A 211-amino-acid chain; its full sequence is Endonuclease III (211 aa).

Positions 108 to 127 (REALEALAGVGRKTANVVLN) constitute a HhH domain. Residues cysteine 187, cysteine 194, cysteine 197, and cysteine 203 each coordinate [4Fe-4S] cluster.

This sequence belongs to the Nth/MutY family. [4Fe-4S] cluster serves as cofactor.

It carries out the reaction 2'-deoxyribonucleotide-(2'-deoxyribose 5'-phosphate)-2'-deoxyribonucleotide-DNA = a 3'-end 2'-deoxyribonucleotide-(2,3-dehydro-2,3-deoxyribose 5'-phosphate)-DNA + a 5'-end 5'-phospho-2'-deoxyribonucleoside-DNA + H(+). In terms of biological role, DNA repair enzyme that has both DNA N-glycosylase activity and AP-lyase activity. The DNA N-glycosylase activity releases various damaged pyrimidines from DNA by cleaving the N-glycosidic bond, leaving an AP (apurinic/apyrimidinic) site. The AP-lyase activity cleaves the phosphodiester bond 3' to the AP site by a beta-elimination, leaving a 3'-terminal unsaturated sugar and a product with a terminal 5'-phosphate. This Haemophilus influenzae (strain ATCC 51907 / DSM 11121 / KW20 / Rd) protein is Endonuclease III.